The primary structure comprises 177 residues: Large ribosomal subunit protein uL10 (177 aa).

Belongs to the universal ribosomal protein uL10 family. As to quaternary structure, part of the ribosomal stalk of the 50S ribosomal subunit. The N-terminus interacts with L11 and the large rRNA to form the base of the stalk. The C-terminus forms an elongated spine to which L12 dimers bind in a sequential fashion forming a multimeric L10(L12)X complex.

Forms part of the ribosomal stalk, playing a central role in the interaction of the ribosome with GTP-bound translation factors. This chain is Large ribosomal subunit protein uL10, found in Legionella pneumophila (strain Paris).